The primary structure comprises 150 residues: Large ribosomal subunit protein bL9 (150 aa).

The protein belongs to the bacterial ribosomal protein bL9 family.

Its function is as follows. Binds to the 23S rRNA. This Lactiplantibacillus plantarum (strain ATCC BAA-793 / NCIMB 8826 / WCFS1) (Lactobacillus plantarum) protein is Large ribosomal subunit protein bL9.